The following is a 455-amino-acid chain: Kynurenine 3-monooxygenase (455 aa).

It belongs to the aromatic-ring hydroxylase family. KMO subfamily. FAD serves as cofactor.

The catalysed reaction is L-kynurenine + NADPH + O2 + H(+) = 3-hydroxy-L-kynurenine + NADP(+) + H2O. It functions in the pathway cofactor biosynthesis; NAD(+) biosynthesis; quinolinate from L-kynurenine: step 1/3. Functionally, catalyzes the hydroxylation of L-kynurenine (L-Kyn) to form 3-hydroxy-L-kynurenine (L-3OHKyn). Required for synthesis of quinolinic acid. This chain is Kynurenine 3-monooxygenase, found in Xanthomonas euvesicatoria pv. vesicatoria (strain 85-10) (Xanthomonas campestris pv. vesicatoria).